The following is a 157-amino-acid chain: Protein-export protein SecB (157 aa).

The protein belongs to the SecB family. As to quaternary structure, homotetramer, a dimer of dimers. One homotetramer interacts with 1 SecA dimer.

It localises to the cytoplasm. Its function is as follows. One of the proteins required for the normal export of preproteins out of the cell cytoplasm. It is a molecular chaperone that binds to a subset of precursor proteins, maintaining them in a translocation-competent state. It also specifically binds to its receptor SecA. The chain is Protein-export protein SecB from Magnetococcus marinus (strain ATCC BAA-1437 / JCM 17883 / MC-1).